We begin with the raw amino-acid sequence, 134 residues long: MTSTVELTKENFDQTVTDNEFVLIDFWAEWCGPCKQFGPVYEKAAEANPDLVFGKVDTEAQPELAQAFGISSIPTLMIVREQVAVFAQPGALPEAALTDVIGQARKLDMDEVRKAVAEQQAQAGQNGQEGQEGQ.

The Thioredoxin domain occupies serine 3 to lysine 106. Cysteine 31 and cysteine 34 are oxidised to a cystine. A disordered region spans residues alanine 115 to glutamine 134. The span at alanine 117–glutamine 134 shows a compositional bias: low complexity.

This sequence belongs to the thioredoxin family.

The protein localises to the cytoplasm. Functionally, component of the thioredoxin-thioredoxin reductase system. Participates in various redox reactions through the reversible oxidation of its active center dithiol to a disulfide and catalyzes dithiol-disulfide exchange reactions. The protein is Putative thioredoxin 2 (trxC) of Streptomyces coelicolor (strain ATCC BAA-471 / A3(2) / M145).